A 385-amino-acid polypeptide reads, in one-letter code: 1-deoxy-D-xylulose 5-phosphate reductoisomerase 1 (385 aa).

Positions 11, 12, 13, 14, 39, and 122 each coordinate NADPH. K123 contributes to the 1-deoxy-D-xylulose 5-phosphate binding site. E124 is a binding site for NADPH. Residue D148 participates in Mn(2+) binding. Positions 149, 150, 174, and 197 each coordinate 1-deoxy-D-xylulose 5-phosphate. E150 is a Mn(2+) binding site. G203 lines the NADPH pocket. Residues S210, N215, K216, and E219 each coordinate 1-deoxy-D-xylulose 5-phosphate. E219 provides a ligand contact to Mn(2+).

Belongs to the DXR family. Mg(2+) serves as cofactor. It depends on Mn(2+) as a cofactor.

It carries out the reaction 2-C-methyl-D-erythritol 4-phosphate + NADP(+) = 1-deoxy-D-xylulose 5-phosphate + NADPH + H(+). The protein operates within isoprenoid biosynthesis; isopentenyl diphosphate biosynthesis via DXP pathway; isopentenyl diphosphate from 1-deoxy-D-xylulose 5-phosphate: step 1/6. In terms of biological role, catalyzes the NADPH-dependent rearrangement and reduction of 1-deoxy-D-xylulose-5-phosphate (DXP) to 2-C-methyl-D-erythritol 4-phosphate (MEP). The sequence is that of 1-deoxy-D-xylulose 5-phosphate reductoisomerase 1 from Bacillus thuringiensis subsp. konkukian (strain 97-27).